The sequence spans 341 residues: tRNA N6-adenosine threonylcarbamoyltransferase (341 aa).

The Fe cation site is built by H115 and H119. Residues 137–141 (AVSGG), D170, G183, D187, and N276 each bind substrate. D306 lines the Fe cation pocket.

The protein belongs to the KAE1 / TsaD family. Fe(2+) serves as cofactor.

Its subcellular location is the cytoplasm. The enzyme catalyses L-threonylcarbamoyladenylate + adenosine(37) in tRNA = N(6)-L-threonylcarbamoyladenosine(37) in tRNA + AMP + H(+). Required for the formation of a threonylcarbamoyl group on adenosine at position 37 (t(6)A37) in tRNAs that read codons beginning with adenine. Is involved in the transfer of the threonylcarbamoyl moiety of threonylcarbamoyl-AMP (TC-AMP) to the N6 group of A37, together with TsaE and TsaB. TsaD likely plays a direct catalytic role in this reaction. In Lacticaseibacillus casei (strain BL23) (Lactobacillus casei), this protein is tRNA N6-adenosine threonylcarbamoyltransferase.